A 492-amino-acid chain; its full sequence is Glutamyl-tRNA(Gln) amidotransferase subunit A (492 aa).

Residues Lys80 and Ser155 each act as charge relay system in the active site. Ser179 (acyl-ester intermediate) is an active-site residue.

Belongs to the amidase family. GatA subfamily. In terms of assembly, heterotrimer of A, B and C subunits.

The enzyme catalyses L-glutamyl-tRNA(Gln) + L-glutamine + ATP + H2O = L-glutaminyl-tRNA(Gln) + L-glutamate + ADP + phosphate + H(+). Its function is as follows. Allows the formation of correctly charged Gln-tRNA(Gln) through the transamidation of misacylated Glu-tRNA(Gln) in organisms which lack glutaminyl-tRNA synthetase. The reaction takes place in the presence of glutamine and ATP through an activated gamma-phospho-Glu-tRNA(Gln). The polypeptide is Glutamyl-tRNA(Gln) amidotransferase subunit A (Mycobacteroides abscessus (strain ATCC 19977 / DSM 44196 / CCUG 20993 / CIP 104536 / JCM 13569 / NCTC 13031 / TMC 1543 / L948) (Mycobacterium abscessus)).